The chain runs to 406 residues: Serine/threonine transporter SstT (406 aa).

Helical transmembrane passes span 15–35, 47–67, 81–101, 140–160, 191–211, 215–235, 289–309, 315–335, and 362–382; these read LVIQ…VSPS, FVGA…AASI, IIVM…VLSF, ALMS…GLAL, FGIF…ALAG, LLVV…PAMV, IPLG…TLTL, MGIE…AVSA, and IAMQ…SAET.

This sequence belongs to the dicarboxylate/amino acid:cation symporter (DAACS) (TC 2.A.23) family.

Its subcellular location is the cell inner membrane. The enzyme catalyses L-serine(in) + Na(+)(in) = L-serine(out) + Na(+)(out). The catalysed reaction is L-threonine(in) + Na(+)(in) = L-threonine(out) + Na(+)(out). Functionally, involved in the import of serine and threonine into the cell, with the concomitant import of sodium (symport system). The sequence is that of Serine/threonine transporter SstT from Vibrio vulnificus (strain YJ016).